The primary structure comprises 241 residues: Type III pantothenate kinase (241 aa).

6-13 (DVGNTRIK) contacts ATP. 94 to 97 (GIDR) provides a ligand contact to substrate. Aspartate 96 (proton acceptor) is an active-site residue. Aspartate 117 serves as a coordination point for K(+). ATP is bound at residue threonine 120. Threonine 172 lines the substrate pocket.

Belongs to the type III pantothenate kinase family. As to quaternary structure, homodimer. NH4(+) is required as a cofactor. K(+) serves as cofactor.

Its subcellular location is the cytoplasm. The catalysed reaction is (R)-pantothenate + ATP = (R)-4'-phosphopantothenate + ADP + H(+). It functions in the pathway cofactor biosynthesis; coenzyme A biosynthesis; CoA from (R)-pantothenate: step 1/5. Its function is as follows. Catalyzes the phosphorylation of pantothenate (Pan), the first step in CoA biosynthesis. In Flavobacterium psychrophilum (strain ATCC 49511 / DSM 21280 / CIP 103535 / JIP02/86), this protein is Type III pantothenate kinase.